Here is a 751-residue protein sequence, read N- to C-terminus: Semaphorin-3C (751 aa).

The signal sequence occupies residues 1 to 20 (MAFRTICVLVGVFICSICVK). Positions 28 to 511 (RVYLTFDELR…SNEGVSQVSL (484 aa)) constitute a Sema domain. A glycan (N-linked (GlcNAc...) asparagine) is linked at Asn81. An intrachain disulfide couples Cys101 to Cys112. Asn123 carries an N-linked (GlcNAc...) asparagine glycan. Cys130 and Cys139 are disulfide-bonded. Asn252 and Asn268 each carry an N-linked (GlcNAc...) asparagine glycan. Cystine bridges form between Cys266–Cys378 and Cys290–Cys338. N-linked (GlcNAc...) asparagine glycosylation is present at Asn465. A disulfide bridge connects residues Cys514 and Cys532. The Ig-like C2-type domain maps to 571 to 655 (AYRNAAEIVQ…TENSFKQTIA (85 aa)). Residues Asn585 and Asn586 are each glycosylated (N-linked (GlcNAc...) asparagine). Residues Cys643 and Cys709 are joined by a disulfide bond. Positions 712 to 731 (TRQQHQQGDESQKMRGDYGK) are enriched in basic and acidic residues. The interval 712 to 751 (TRQQHQQGDESQKMRGDYGKLKALINSRKSRNRRNQLPES) is disordered.

This sequence belongs to the semaphorin family. Interacts with PLXND1. As to expression, expressed intensely in the heart, skeletal muscle, colon, small intestine, ovary, testis, and prostate. Faint expression ubiquitously among other organs, including brain.

The protein localises to the secreted. Binds to plexin family members and plays an important role in the regulation of developmental processes. Required for normal cardiovascular development during embryogenesis. Functions as attractant for growing axons, and thereby plays an important role in axon growth and axon guidance. This is Semaphorin-3C (SEMA3C) from Homo sapiens (Human).